Here is a 302-residue protein sequence, read N- to C-terminus: Glycine--tRNA ligase alpha subunit (302 aa).

The protein belongs to the class-II aminoacyl-tRNA synthetase family. As to quaternary structure, tetramer of two alpha and two beta subunits.

Its subcellular location is the cytoplasm. It catalyses the reaction tRNA(Gly) + glycine + ATP = glycyl-tRNA(Gly) + AMP + diphosphate. The polypeptide is Glycine--tRNA ligase alpha subunit (Haemophilus influenzae (strain PittGG)).